The sequence spans 485 residues: GlcNAc-binding protein A (485 aa).

The first 23 residues, 1 to 23 (MKKQPKMTAIALILSGISGLAYG), serve as a signal peptide directing secretion. The region spanning 24–201 (HGYVSAVENG…SFYNVIDVKF (178 aa)) is the Chitin-binding type-4 domain. The 42-residue stretch at 437-478 (AGTKVLASDGAIYQCKPWPYSGYCQQWTSNATQYQPGTGSHW) folds into the Chitin-binding type-3 domain.

It belongs to the GbpA family.

The protein localises to the secreted. Its function is as follows. Probably interacts with GlcNAc residues. May promote attachment to both epithelial cell surfaces and chitin. The sequence is that of GlcNAc-binding protein A from Vibrio cholerae serotype O1 (strain ATCC 39541 / Classical Ogawa 395 / O395).